The following is a 161-amino-acid chain: RNA pyrophosphohydrolase (161 aa).

Residues 6-149 (GYRPNVGIIL…KKDVYRRALK (144 aa)) enclose the Nudix hydrolase domain. Positions 38–59 (GGIKSDETPEEALFRELKEEVG) match the Nudix box motif.

It belongs to the Nudix hydrolase family. RppH subfamily. A divalent metal cation serves as cofactor.

In terms of biological role, accelerates the degradation of transcripts by removing pyrophosphate from the 5'-end of triphosphorylated RNA, leading to a more labile monophosphorylated state that can stimulate subsequent ribonuclease cleavage. The chain is RNA pyrophosphohydrolase from Marinomonas sp. (strain MWYL1).